We begin with the raw amino-acid sequence, 312 residues long: Probable N-glycosylase/DNA lyase (312 aa).

Positions 1-22 (MRIPVGDFDLEMTQRSGQTSQP) are disordered. Over residues 13 to 22 (TQRSGQTSQP) the composition is skewed to polar residues. Lysine 235 is an active-site residue.

It belongs to the type-1 OGG1 family.

The catalysed reaction is 2'-deoxyribonucleotide-(2'-deoxyribose 5'-phosphate)-2'-deoxyribonucleotide-DNA = a 3'-end 2'-deoxyribonucleotide-(2,3-dehydro-2,3-deoxyribose 5'-phosphate)-DNA + a 5'-end 5'-phospho-2'-deoxyribonucleoside-DNA + H(+). DNA repair enzyme that incises DNA at 8-oxoG residues. Excises 7,8-dihydro-8-oxoguanine and 2,6-diamino-4-hydroxy-5-N-methylformamidopyrimidine (FAPY) from damaged DNA. Has a beta-lyase activity that nicks DNA 3' to the lesion. This is Probable N-glycosylase/DNA lyase from Methanothermobacter thermautotrophicus (strain ATCC 29096 / DSM 1053 / JCM 10044 / NBRC 100330 / Delta H) (Methanobacterium thermoautotrophicum).